A 365-amino-acid polypeptide reads, in one-letter code: Forkhead box protein H1 (365 aa).

The tract at residues 1–29 (MGPCSGSRLGPPEAESPSQPPKRRKKRYL) is disordered. A DNA-binding region (fork-head) is located at residues 32–128 (DKPPYTYLAM…ALRLQNTALC (97 aa)). The disordered stretch occupies residues 151–215 (GRPYRPPSPP…TPPLPSSERP (65 aa)). Over residues 154-164 (YRPPSPPPPPS) the composition is skewed to pro residues. The tract at residues 273-354 (LWGQLPTSYL…VSHPRDLAAP (82 aa)) is SMAD-interaction domain (SID). Positions 277-281 (LPTSY) match the Fast/FoxH1 motif 1 (FM1) motif. Residues 287 to 293 (PNVVMPL) carry the Fast/FoxH1 motif 2 (FM2) motif. The SMAD interaction motif (SIM) motif lies at 327–348 (LDALFQGVPPNKSIYDVWVSHP).

As to quaternary structure, interacts with the MH2 domains of SMAD2 and SMAD3. In terms of tissue distribution, ubiquitous.

The protein localises to the nucleus. Its function is as follows. Transcriptional activator. Recognizes and binds to the DNA sequence 5'-TGT[GT][GT]ATT-3'. Required for induction of the goosecoid (GSC) promoter by TGF-beta or activin signaling. Forms a transcriptionally active complex containing FOXH1/SMAD2/SMAD4 on a site on the GSC promoter called TARE (TGF-beta/activin response element). This is Forkhead box protein H1 (FOXH1) from Homo sapiens (Human).